A 469-amino-acid chain; its full sequence is Mitochondrial-processing peptidase subunit beta (469 aa).

His78 lines the Zn(2+) pocket. Residue Glu81 is the Proton acceptor of the active site. His82 and Glu159 together coordinate Zn(2+).

The protein belongs to the peptidase M16 family. In terms of assembly, heterodimer of alpha and beta subunits, forming the mitochondrial processing protease (MPP) in which subunit alpha is involved in substrate recognition and binding and subunit beta is the catalytic subunit. mppB is probably also part of the cytochrome bc1 complex as a core I protein in the mitochondrial inner membrane. The cofactor is Zn(2+).

The protein localises to the mitochondrion inner membrane. Its subcellular location is the mitochondrion matrix. It carries out the reaction Release of N-terminal transit peptides from precursor proteins imported into the mitochondrion, typically with Arg in position P2.. Its activity is regulated as follows. Binding to alpha subunit is required for catalytic activity. Functionally, catalytic subunit of the essential mitochondrial processing protease (MPP), which cleaves the mitochondrial sequence off newly imported precursors proteins. Preferentially, cleaves after an arginine at position P2. Plays an essential role in mitochondrial biogenesis. This Dictyostelium discoideum (Social amoeba) protein is Mitochondrial-processing peptidase subunit beta (mppB).